Consider the following 521-residue polypeptide: Cytochrome P450 monooxygenase astF (521 aa).

Residues 14–34 (TMATFLLPVAIGTIILLFLYG) traverse the membrane as a helical segment. Residues Asn198, Asn218, Asn268, and Asn281 are each glycosylated (N-linked (GlcNAc...) asparagine). Cys430 provides a ligand contact to heme.

It belongs to the cytochrome P450 family. It depends on heme as a cofactor.

It is found in the membrane. The protein operates within secondary metabolite biosynthesis; terpenoid biosynthesis. Functionally, cytochrome P450 monooxygenase; part of the gene cluster that mediates the biosynthesis of astellolides, drimane-type sesquiterpene esters that show antimicrobial, anti-inflammatory, and anti-tumor activities. The first step in astellolide biosynthesis is performed by the sesquiterpene cyclase astC that catalyzes the formation of drimanyl pyrophosphate from farnesyl pyrophosphate. Drimanyl pyrophosphate is then dephosphorylated by the sesquiterpene phosphatase astI to produce drimanyl monophosphate which is further dephosphorylated to drim-8-ene-11-ol by atsK. Drim-8-ene-11-ol is converted to confertifolin, probably by the cytochrome P450 monooxygenase astD and/or the dehydrogenase astE. The cytochrome P450 monooxygenases astB, astF and astJ then hydroxylate confertifolin at C6, C14, or C15 to form trihydroxy confertifolin. The nonribosomal peptide synthetase astA catalyzes ester bond formation between trihydroxy contifolin and benzoic acid (BA) or 4-hydroxy benzoic acid (4HBA), leading to the formation of dideacetyl astellolides A and B, respectively. Finally, the O-acetyltransferase astG converts dideacetyl astellolides A and B into deacetyl astellolides A and B. This Aspergillus oryzae (strain ATCC 42149 / RIB 40) (Yellow koji mold) protein is Cytochrome P450 monooxygenase astF.